A 167-amino-acid chain; its full sequence is Novel acetylcholine receptor chaperone (167 aa).

At 1 to 5 the chain is on the cytoplasmic side; that stretch reads MASPR. A helical transmembrane segment spans residues 6–26; the sequence is TVTIVALSVALGLFFVFMGTI. Residues 27 to 61 are Lumenal-facing; the sequence is KLTPRLSKDAYSEMKRAYKSYVRALPLLKKMGINS. The segment at 43–54 is interaction with NGFR; sequence AYKSYVRALPLL. The chain crosses the membrane as a helical span at residues 62-82; that stretch reads ILLRKSIGALEVACGIVMTLV. At 83-88 the chain is on the cytoplasmic side; the sequence is PGRPKD. Residues 89–109 form a helical membrane-spanning segment; the sequence is VANFFLLLLVLAVLFFHQLVG. Residues 110 to 114 lie on the Lumenal side of the membrane; that stretch reads DPLKR. Residues 115-132 form a helical membrane-spanning segment; the sequence is YAHALVFGILLTCRLLIA. Residues 133–167 lie on the Cytoplasmic side of the membrane; that stretch reads RKPEDRSSEKKPLPGNAEEQPSLYEKAPQGKVKVS. The tract at residues 136–167 is disordered; the sequence is EDRSSEKKPLPGNAEEQPSLYEKAPQGKVKVS.

This sequence belongs to the DoxX family. In terms of assembly, may interact with NGFR. Interacts with RPN1, RPN2 and CANX.

It is found in the peroxisome membrane. The protein localises to the cytoplasmic vesicle. The protein resides in the endoplasmic reticulum membrane. Molecular chaperone which mediates the proper assembly and functional expression of the nicotinic acetylcholine receptors (nAChRs) throughout the brain. Essential for the proper folding, assembly, function and surface trafficking of alpha-7 (CHRNA7), alpha-4-beta-2, alpha-3-beta-2 and alpha-3-beta-4 receptors. Stably associates with ribophorin-1 (RPN1) and ribophorin-2 (RPN2) (components of the oligosaccharyl transferase (OST) complex) and with calnexin (CANX), both of which are critical for NACHO-mediated effects on CHRNA7 assembly and function. Facilitates the proper folding and assembly of alpha-6-beta-2 and alpha-6-beta-2-beta-3 receptors and acts at early stages of the nAChRs subunit assembly. Promotes the expression of the alpha-4(2):beta-2(3) stoichiometric form over the alpha-4(3):beta-2(2) form. This Macaca fascicularis (Crab-eating macaque) protein is Novel acetylcholine receptor chaperone (TMEM35A).